The primary structure comprises 343 residues: Autoinducer 2 import system permease protein LsrC (343 aa).

Helical transmembrane passes span 13–33 (FLAILALFGVLVALNPAYLSF), 38–58 (MIFASSQILILLALGAALVML), 61–81 (NIDVSVGSTVGLCAIAVGVAL), 92–112 (LFALAIGALAGAFNGLLVVGL), 114–134 (IPAIVATLGTLGLYRGAMLLW), 154–174 (VALGVSPLGMAVLFLVLIGAW), 212–232 (INGMLAACAGIVFASQIGFVP), 251–271 (GISLLGGTGTLIGAFLGAFFL), and 283–303 (LPAWWNDFIAGLVLLGVLVLD). The disordered stretch occupies residues 321–343 (RFQPGNKGGKHVTPFPKRKKEVA).

Belongs to the binding-protein-dependent transport system permease family. AraH/RbsC subfamily. In terms of assembly, the complex is composed of two ATP-binding proteins (LsrA), two transmembrane proteins (LsrC and LsrD) and a solute-binding protein (LsrB).

Its subcellular location is the cell inner membrane. Its function is as follows. Part of the ABC transporter complex LsrABCD involved in autoinducer 2 (AI-2) import. Probably responsible for the translocation of the substrate across the membrane. This Enterobacter sp. (strain 638) protein is Autoinducer 2 import system permease protein LsrC (lsrC).